A 58-amino-acid chain; its full sequence is MFTMKKSLLLLFFLGTISMSLCEEKRDADEEETEGEAKMEDIKRAEAVPPGFTPFRKP.

The first 22 residues, 1-22 (MFTMKKSLLLLFFLGTISMSLC), serve as a signal peptide directing secretion. Positions 23-43 (EEKRDADEEETEGEAKMEDIK) are excised as a propeptide. The disordered stretch occupies residues 25–58 (KRDADEEETEGEAKMEDIKRAEAVPPGFTPFRKP). Positions 35–46 (GEAKMEDIKRAE) are enriched in basic and acidic residues.

Expressed by the skin glands.

The protein resides in the secreted. Its function is as follows. Induces contraction of intestinal smooth muscle in isolated guinea pig ileum. May induce relaxation of arterial smooth muscle. May target bradykinin receptors (BDKRB). Lacks antibacterial activity against the Gram-positive bacterium S.aureus and the Gram-negative bacteria E.coli and B.dysenteria, and antifungal activity against C.albicans. The polypeptide is Ranakinin-N (Hylarana nigrovittata (Black-striped frog)).